Consider the following 629-residue polypeptide: tRNA uridine 5-carboxymethylaminomethyl modification enzyme MnmG (629 aa).

Residues Gly13–Gly18, Val125, and Ser180 contribute to the FAD site. Gly273–Phe287 contributes to the NAD(+) binding site. Residue Gln370 coordinates FAD.

Belongs to the MnmG family. In terms of assembly, homodimer. Heterotetramer of two MnmE and two MnmG subunits. FAD serves as cofactor.

It localises to the cytoplasm. In terms of biological role, NAD-binding protein involved in the addition of a carboxymethylaminomethyl (cmnm) group at the wobble position (U34) of certain tRNAs, forming tRNA-cmnm(5)s(2)U34. The polypeptide is tRNA uridine 5-carboxymethylaminomethyl modification enzyme MnmG (Salmonella typhi).